The sequence spans 702 residues: Cytolytic toxin-beta (702 aa).

The tract at residues 2–264 (PSDILVVAAL…EAPQLMADSS (263 aa)) is structural MACPF/CDC pore-forming domain. 3 N-linked (GlcNAc...) asparagine glycosylation sites follow: Asn-94, Asn-101, and Asn-286. The segment at 265 to 387 (TPILRKVRNT…DIIEEAKHKV (123 aa)) is structural FAT domain. A thioredoxin (THX) domain region spans residues 388-515 (VLSKSQMARE…PRIPPVETIQ (128 aa)). The 199-residue stretch at 504 to 702 (SNPRIPPVET…ANGQIKLKGE (199 aa)) folds into the B30.2/SPRY domain.

Belongs to the SNTX/VTX toxin family. In terms of assembly, heterodimer of alpha and beta subunits; non-covalently linked. Also associates into tetramers or even higher aggregates. Intrachain disulfide bonds may be present in the heterodimer. As to expression, expressed by the venom gland.

The protein resides in the secreted. Its function is as follows. This heterodimer induces potent hemolytic activities (when tested on rabbit erythrocytes, EC(50)=25-56 ng/mL) due to its ability to form pores in the cell membrane. The pore may be composed of 10 alpha/beta heterodimers. The toxin shows cardiovascular effects that include a vasorelaxant action that may involve the L-arginine-nitric oxid synthase pathway. In addition, it displays edema-inducing activities, increases vascular permeability. It also shows myotoxic activities and interferes irreversibly with neuromuscular function. It also induces irreversible platelet aggregation in rabbit or rat (but not in human or mouse) whole blood. In addition, it has been observed to increase spontaneous quantal acetylcholine release from isolated frog cutaneous pectoris motor endings. This is Cytolytic toxin-beta from Scorpaena plumieri (Spotted scorpionfish).